The chain runs to 456 residues: Bifunctional protein GlmU (456 aa).

Residues 1-229 (MLNSAMSVVI…ISETDGVNNR (229 aa)) are pyrophosphorylase. Residues 11 to 14 (LAAG), Lys25, Gln76, 81 to 82 (GT), 103 to 105 (YGD), Gly140, Glu154, Asn169, and Asn227 each bind UDP-N-acetyl-alpha-D-glucosamine. Residue Asp105 coordinates Mg(2+). Residue Asn227 participates in Mg(2+) binding. The segment at 230–250 (LQLSRLERIYQAEQAEKLLLS) is linker. Residues 251–456 (GVMLRDPARF…QGWQRPVKKK (206 aa)) form an N-acetyltransferase region. The UDP-N-acetyl-alpha-D-glucosamine site is built by Arg333 and Lys351. His363 acts as the Proton acceptor in catalysis. 2 residues coordinate UDP-N-acetyl-alpha-D-glucosamine: Tyr366 and Asn377. Residues Ala380, 386-387 (NY), Ser405, Ala423, and Arg440 contribute to the acetyl-CoA site.

The protein in the N-terminal section; belongs to the N-acetylglucosamine-1-phosphate uridyltransferase family. In the C-terminal section; belongs to the transferase hexapeptide repeat family. In terms of assembly, homotrimer. Mg(2+) serves as cofactor.

It localises to the cytoplasm. It catalyses the reaction alpha-D-glucosamine 1-phosphate + acetyl-CoA = N-acetyl-alpha-D-glucosamine 1-phosphate + CoA + H(+). The catalysed reaction is N-acetyl-alpha-D-glucosamine 1-phosphate + UTP + H(+) = UDP-N-acetyl-alpha-D-glucosamine + diphosphate. It functions in the pathway nucleotide-sugar biosynthesis; UDP-N-acetyl-alpha-D-glucosamine biosynthesis; N-acetyl-alpha-D-glucosamine 1-phosphate from alpha-D-glucosamine 6-phosphate (route II): step 2/2. The protein operates within nucleotide-sugar biosynthesis; UDP-N-acetyl-alpha-D-glucosamine biosynthesis; UDP-N-acetyl-alpha-D-glucosamine from N-acetyl-alpha-D-glucosamine 1-phosphate: step 1/1. It participates in bacterial outer membrane biogenesis; LPS lipid A biosynthesis. In terms of biological role, catalyzes the last two sequential reactions in the de novo biosynthetic pathway for UDP-N-acetylglucosamine (UDP-GlcNAc). The C-terminal domain catalyzes the transfer of acetyl group from acetyl coenzyme A to glucosamine-1-phosphate (GlcN-1-P) to produce N-acetylglucosamine-1-phosphate (GlcNAc-1-P), which is converted into UDP-GlcNAc by the transfer of uridine 5-monophosphate (from uridine 5-triphosphate), a reaction catalyzed by the N-terminal domain. This is Bifunctional protein GlmU from Salmonella gallinarum (strain 287/91 / NCTC 13346).